The chain runs to 302 residues: UDP-N-acetylenolpyruvoylglucosamine reductase (302 aa).

The region spanning 31-213 is the FAD-binding PCMH-type domain; that stretch reads KIGGPADFLI…KKIREFREKR (183 aa). Arg176 is a catalytic residue. Ser226 serves as the catalytic Proton donor. The active site involves Glu296.

The protein belongs to the MurB family. Requires FAD as cofactor.

It is found in the cytoplasm. It catalyses the reaction UDP-N-acetyl-alpha-D-muramate + NADP(+) = UDP-N-acetyl-3-O-(1-carboxyvinyl)-alpha-D-glucosamine + NADPH + H(+). It functions in the pathway cell wall biogenesis; peptidoglycan biosynthesis. Its function is as follows. Cell wall formation. This is UDP-N-acetylenolpyruvoylglucosamine reductase from Carboxydothermus hydrogenoformans (strain ATCC BAA-161 / DSM 6008 / Z-2901).